Here is a 73-residue protein sequence, read N- to C-terminus: Translation initiation factor IF-1 (73 aa).

The 73-residue stretch at 1–73 (MPKKDGAIEI…TRGRIVYRYK (73 aa)) folds into the S1-like domain.

The protein belongs to the IF-1 family. In terms of assembly, component of the 30S ribosomal translation pre-initiation complex which assembles on the 30S ribosome in the order IF-2 and IF-3, IF-1 and N-formylmethionyl-tRNA(fMet); mRNA recruitment can occur at any time during PIC assembly.

The protein localises to the cytoplasm. Functionally, one of the essential components for the initiation of protein synthesis. Stabilizes the binding of IF-2 and IF-3 on the 30S subunit to which N-formylmethionyl-tRNA(fMet) subsequently binds. Helps modulate mRNA selection, yielding the 30S pre-initiation complex (PIC). Upon addition of the 50S ribosomal subunit IF-1, IF-2 and IF-3 are released leaving the mature 70S translation initiation complex. This Salinispora arenicola (strain CNS-205) protein is Translation initiation factor IF-1.